The sequence spans 205 residues: uncharacterized protein (205 aa).

The HTH tetR-type domain occupies 11 to 71 (DKRQAEILEA…RIIETGLDEG (61 aa)). Residues 34–53 (TMKDVVEESGFSRGGVYLYF) constitute a DNA-binding region (H-T-H motif).

This is an uncharacterized protein from Bacillus subtilis (strain 168).